The sequence spans 747 residues: Plakophilin-1 (747 aa).

Positions 1–234 (MNHSPLKTAL…SFGHSRASSK (234 aa)) are required for binding to single stranded DNA. The segment at 1 to 286 (MNHSPLKTAL…ESAKQQVYQL (286 aa)) is required for interaction with EIF4A1. At S4 the chain carries Phosphoserine. Positions 48 to 68 (TVKRQKSKSSQSSTLSHSNRG) are disordered. Phosphorylation in this region is required for cytoplasmic localization and protein stabilization regions lie at residues 54–69 (SKSS…NRGS) and 116–191 (RFSS…STCS). S118 carries the phosphoserine; by PKB/AKT2 modification. Phosphoserine occurs at positions 119, 121, and 142. The segment at 160 to 269 (YCDPRGTLRK…KYQAIGAYYI (110 aa)) is required for WNT-mediated nuclear localization. ARM repeat units lie at residues 243–274 (SGLT…HTCF), 275–316 (QDES…NLVF), 317–359 (RSTT…NLSS), 360–415 (TDEL…KRLG), 416–463 (MREL…NCVA), 525–556 (NYDC…LNLM), 557–603 (GKSK…IARL), 604–649 (LQSG…SHTG), and 650–713 (NTSN…DMWS).

This sequence belongs to the beta-catenin family. In terms of assembly, part of a complex that contains DSG3, PKP1, YAP1 and YWHAG; the complex is required for localization of DSG3 and YAP1 to the cell membrane in keratinocytes. Interacts with DSP. Interacts (via N-terminus) with KRT5/CK5, KRT8/CK8 (via rod domain), KRT15/CK15 and KRT18/CK18 (via rod domain) as part of intermediate filaments. Interacts with VIM (via rod domain). Interacts with DSP. Interacts with DES. Interacts with FXR1; the interaction may facilitate the binding of PKP1 to PKP2, PKP3 and DSP mRNA. Interacts (via N-terminus) with EIF4A1; the interaction promotes EIF4A1 recruitment to the cap-dependent translation complex and EIF4A1 ATPase activity. Interacts with TJP1/ZO-1; the interaction facilitates TJP1/ZO-1 localization to the plasma membrane. Interacts (when phosphorylated) with YWHAG; the interaction results in translocation of PKP1 to the cytoplasm and loss of intercellular adhesion in keratinocytes. Phosphorylated by AKT2; required for interaction with YWHAG and subsequent localization away from desmosomes to the cytoplasm. Phosphorylation of Ser-118 by AKT2 promotes PKP1-driven cap-dependent mRNA translation and decreases intercellular adhesion, phosphorylation is promoted by insulin. Phosphorylation by RIPK4 at the N-terminus is required for its role in differentiation of keratinocytes and DSG1 localization at cell junctions. Expressed in stratified squamous, complex, glandular duct and bladder epithelia (at protein level). As to expression, widely expressed (at protein level).

The protein localises to the cell junction. The protein resides in the desmosome. It localises to the nucleus. Its subcellular location is the cytoplasm. It is found in the perinuclear region. The protein localises to the cell membrane. The protein resides in the stress granule. Functionally, a component of desmosome cell-cell junctions which are required for positive regulation of cellular adhesion. Plays a role in desmosome protein expression regulation and localization to the desmosomal plaque, thereby maintaining cell sheet integrity and anchorage of desmosomes to intermediate filaments. Required for localization of DSG3 and YAP1 to the cell membrane in keratinocytes in response to mechanical strain, via the formation of an interaction complex composed of DSG3, YAP1, PKP1 and YWHAG. Positively regulates differentiation of keratinocytes, potentially via promoting localization of DSG1 at desmosome cell junctions. Required for calcium-independent development and maturation of desmosome plaques specifically at lateral cell-cell contacts in differentiating keratinocytes. Plays a role in the maintenance of DSG3 protein abundance, DSG3 clustering and localization of these clusters to the cell membrane in keratinocytes. May also promote keratinocyte proliferation and morphogenesis during postnatal development. Required for tight junction inside-out transepidermal barrier function of the skin. Promotes Wnt-mediated proliferation and differentiation of ameloblasts, via facilitating TJP1/ZO-1 localization to tight junctions. Binds single-stranded DNA (ssDNA), and may thereby play a role in sensing DNA damage and promoting cell survival. Positively regulates cap-dependent translation and as a result cell proliferation, via recruitment of EIF4A1 to the initiation complex and promotion of EIF4A1 ATPase activity. Regulates the mRNA stability and protein abundance of desmosome components PKP2, PKP3, DSC2 and DSP, potentially via its interaction with FXR1. The polypeptide is Plakophilin-1 (PKP1) (Homo sapiens (Human)).